The sequence spans 149 residues: Large ribosomal subunit protein bL9 (149 aa).

It belongs to the bacterial ribosomal protein bL9 family.

Its function is as follows. Binds to the 23S rRNA. This is Large ribosomal subunit protein bL9 from Shewanella amazonensis (strain ATCC BAA-1098 / SB2B).